The sequence spans 146 residues: Small ribosomal subunit protein uS9x (146 aa).

The protein belongs to the universal ribosomal protein uS9 family.

The protein resides in the cytoplasm. The protein is Small ribosomal subunit protein uS9x (RPS16C) of Arabidopsis thaliana (Mouse-ear cress).